The primary structure comprises 380 residues: Ribosomal RNA large subunit methyltransferase G (380 aa).

Belongs to the methyltransferase superfamily. RlmG family.

The protein localises to the cytoplasm. It carries out the reaction guanosine(1835) in 23S rRNA + S-adenosyl-L-methionine = N(2)-methylguanosine(1835) in 23S rRNA + S-adenosyl-L-homocysteine + H(+). Its function is as follows. Specifically methylates the guanine in position 1835 (m2G1835) of 23S rRNA. The polypeptide is Ribosomal RNA large subunit methyltransferase G (Streptomyces avermitilis (strain ATCC 31267 / DSM 46492 / JCM 5070 / NBRC 14893 / NCIMB 12804 / NRRL 8165 / MA-4680)).